A 556-amino-acid polypeptide reads, in one-letter code: MNHSEALTEQVFSFASELYAYGVREVVISPGSRSTPLALVFEAHPNIKTWIHPDERSAAFFALGLIKGSEKPVAILCTSGTAAANYTPAIAESQISRLPLVVLTSDRPHELRSVGAPQAINQVNMFSNYVNFQFDLPIADGSEHTIDTINYQMQIASQYLYGPHRGPIHFNLPFREPLTPDLDRVDLLTSVTKTLPHYQKSISVDDIKDILQEKNGLIIVGDMQHQAVDQILTYSTIYDLPILADPLSQLRKEKHPNVITTYDLLYRAGLNLEVDYVIRVGKPVISKKLNQWLKKTDAYQIIVQNNDQIDVFPTPPHISYEISANDFFRSLMEEPLVERKKWLQQWQSLEQQARIEISDYLKHATDEAAYVGSLIQKLTKEDTLFVGNSMPIRDVDNLLFDSEASVYANRGANGIDGVVSTALGMAAHKNVTLLIGDLSFYHDMNGLLMAKLNELHINIVLVNNNGGGIFSYLPQKRSATKYFERLFGTPTGLNFEYTALLYDFTFKRFDNLTDFKYAELSKMGSHMYEVITNRDENLHQHQNLYQKLSEIVNVTL.

This sequence belongs to the TPP enzyme family. MenD subfamily. Homodimer. Mg(2+) serves as cofactor. Requires Mn(2+) as cofactor. The cofactor is thiamine diphosphate.

The enzyme catalyses isochorismate + 2-oxoglutarate + H(+) = 5-enolpyruvoyl-6-hydroxy-2-succinyl-cyclohex-3-ene-1-carboxylate + CO2. It participates in quinol/quinone metabolism; 1,4-dihydroxy-2-naphthoate biosynthesis; 1,4-dihydroxy-2-naphthoate from chorismate: step 2/7. The protein operates within quinol/quinone metabolism; menaquinone biosynthesis. Functionally, catalyzes the thiamine diphosphate-dependent decarboxylation of 2-oxoglutarate and the subsequent addition of the resulting succinic semialdehyde-thiamine pyrophosphate anion to isochorismate to yield 2-succinyl-5-enolpyruvyl-6-hydroxy-3-cyclohexene-1-carboxylate (SEPHCHC). This is 2-succinyl-5-enolpyruvyl-6-hydroxy-3-cyclohexene-1-carboxylate synthase from Staphylococcus epidermidis (strain ATCC 35984 / DSM 28319 / BCRC 17069 / CCUG 31568 / BM 3577 / RP62A).